Consider the following 287-residue polypeptide: MSTINLPLNLTVRVHPVVLFQIVDAYERRNADSERVIGTLLGSVDKGVVEVTNCFCVPHKEHADQVEAELGYASDLYDLNRRVNPSENIVGWWATGQEVTNHSSVIHEYYARECNNPIHLTLDTSLSAARMGIKAYVCVSLGVPGGKTGCMFTPINVEISSYEPEVVGLQLCSKTIGVQQNASRPRTVSPMLDLAQITEASDKLLTLLGEVLNYVEDVLAEKQQPDNSVGRALLDLIHSVPNMTSDQFAQMFNSNVKDLLMVVTLSQLIKTQLQLNEKLTSLTSFIN.

In terms of domain architecture, MPN spans 12 to 142; sequence VRVHPVVLFQ…IKAYVCVSLG (131 aa).

Belongs to the eIF-3 subunit F family. In terms of assembly, component of the eukaryotic translation initiation factor 3 (eIF-3) complex.

It is found in the cytoplasm. Its function is as follows. Component of the eukaryotic translation initiation factor 3 (eIF-3) complex, which is involved in protein synthesis of a specialized repertoire of mRNAs and, together with other initiation factors, stimulates binding of mRNA and methionyl-tRNAi to the 40S ribosome. The eIF-3 complex specifically targets and initiates translation of a subset of mRNAs involved in cell proliferation. The chain is Eukaryotic translation initiation factor 3 subunit F from Aedes aegypti (Yellowfever mosquito).